A 189-amino-acid polypeptide reads, in one-letter code: Isopentenyl-diphosphate Delta-isomerase (189 aa).

2 residues coordinate Mn(2+): His-27 and His-34. Positions 32–171 (PLHFAFSTYI…PFVFSPWLVD (140 aa)) constitute a Nudix hydrolase domain. Cys-69 is an active-site residue. Cys-69 contributes to the Mg(2+) binding site. Residue His-71 coordinates Mn(2+). Position 89 (Glu-89) interacts with Mg(2+). Mn(2+) is bound by residues Glu-119 and Glu-121. Glu-121 is an active-site residue.

This sequence belongs to the IPP isomerase type 1 family. Requires Mg(2+) as cofactor. The cofactor is Mn(2+).

It localises to the cytoplasm. The enzyme catalyses isopentenyl diphosphate = dimethylallyl diphosphate. It participates in isoprenoid biosynthesis; dimethylallyl diphosphate biosynthesis; dimethylallyl diphosphate from isopentenyl diphosphate: step 1/1. Its function is as follows. Catalyzes the 1,3-allylic rearrangement of the homoallylic substrate isopentenyl (IPP) to its highly electrophilic allylic isomer, dimethylallyl diphosphate (DMAPP). This Corynebacterium glutamicum (strain ATCC 13032 / DSM 20300 / JCM 1318 / BCRC 11384 / CCUG 27702 / LMG 3730 / NBRC 12168 / NCIMB 10025 / NRRL B-2784 / 534) protein is Isopentenyl-diphosphate Delta-isomerase.